Consider the following 171-residue polypeptide: Ribosome maturation factor RimM (171 aa).

In terms of domain architecture, PRC barrel spans 97–170 (EGEYYYHEII…LVTIHVMEGL (74 aa)).

This sequence belongs to the RimM family. In terms of assembly, binds ribosomal protein uS19.

The protein localises to the cytoplasm. Functionally, an accessory protein needed during the final step in the assembly of 30S ribosomal subunit, possibly for assembly of the head region. Essential for efficient processing of 16S rRNA. May be needed both before and after RbfA during the maturation of 16S rRNA. It has affinity for free ribosomal 30S subunits but not for 70S ribosomes. The sequence is that of Ribosome maturation factor RimM from Bacillus cereus (strain ZK / E33L).